Here is a 281-residue protein sequence, read N- to C-terminus: Putative outer membrane protein BBA52 (281 aa).

Residues 162-281 (KRISDNQSKL…FFDSLEDQFI (120 aa)) are disordered. Residues 179–196 (NKSVGSKFSKNSRPSKSP) are compositionally biased toward polar residues. The span at 219-249 (EFLDDPSQESDELEREYQDDELESEDPDDGE) shows a compositional bias: acidic residues. The span at 250–262 (REYQDDRESRDDT) shows a compositional bias: basic and acidic residues. The segment covering 263–281 (FNEDQSEDEFFDSLEDQFI) has biased composition (acidic residues).

The protein resides in the cell outer membrane. This is Putative outer membrane protein BBA52 from Borreliella burgdorferi (strain ATCC 35210 / DSM 4680 / CIP 102532 / B31) (Borrelia burgdorferi).